We begin with the raw amino-acid sequence, 170 residues long: Adenine phosphoribosyltransferase (170 aa).

The protein belongs to the purine/pyrimidine phosphoribosyltransferase family. As to quaternary structure, homodimer.

The protein resides in the cytoplasm. The enzyme catalyses AMP + diphosphate = 5-phospho-alpha-D-ribose 1-diphosphate + adenine. The protein operates within purine metabolism; AMP biosynthesis via salvage pathway; AMP from adenine: step 1/1. Catalyzes a salvage reaction resulting in the formation of AMP, that is energically less costly than de novo synthesis. The chain is Adenine phosphoribosyltransferase from Bacillus velezensis (strain DSM 23117 / BGSC 10A6 / LMG 26770 / FZB42) (Bacillus amyloliquefaciens subsp. plantarum).